Consider the following 408-residue polypeptide: PTI1-like tyrosine-protein kinase 3 (408 aa).

Basic and acidic residues predominate over residues 59–76 (SSENEHLRSPKHHNDFGH). Residues 59-91 (SSENEHLRSPKHHNDFGHHTRKPQAAVKPDALK) form a disordered region. A Protein kinase domain is found at 113 to 395 (FGSKSLIGEG…IVVKALQPLL (283 aa)). ATP is bound by residues 119–127 (IGEGSYGRA) and lysine 141. Catalysis depends on aspartate 245, which acts as the Proton acceptor.

Belongs to the protein kinase superfamily. Tyr protein kinase family. In terms of assembly, interacts with OXI1. Post-translationally, phosphorylated by OXI1.

It localises to the cell membrane. It catalyses the reaction L-tyrosyl-[protein] + ATP = O-phospho-L-tyrosyl-[protein] + ADP + H(+). This is PTI1-like tyrosine-protein kinase 3 (PTI13) from Arabidopsis thaliana (Mouse-ear cress).